The chain runs to 731 residues: MDRREDALLQALQTNASETERWEAFKRDNESTIRNLDKFAKNLSVEVMVPIGRKALMPGELIHTNELLVGHYEGYFSACSSHKAKEICQYRLKLAEEQLKKLAVENDLWQKKLHTPFAEGAVPSGDQVEIVEDFNEESHNKWLAEHRKRMRQQKQKERLEREAEPVKKDNEVLRKLEEREMMEELGLDPDNIDEDQLHDMLNQEPLKSTNESSPKSLTQEEEDELWKKLEAEEQNEADELSSEAEESLKTTDNLVRQLMSGETETPSSKKRTAGTNRNVEIQDPISEDDGDDDDEGDQEEEVRTIREQMSLLPNEDREPFLRAQLHVLKAKMRKIQKVNFISDELIHLMNVVVMLEDDLQDLVFEQELEASEEEEEVVENNHLPDEPSKELSTVSESSTNKRRISFALDDEKLEFRREETVAEMLPNAKKNSRDIIKLNAPLKPAGDPQPASIKTKRQTTQDILQKVERNIEFVKENQSVQDFDLLNRIMEESTGLINTLHISFTHSGAIPSPSSDQSDGIPGKPSDFYVRYEKDRARPNDSFPIYVNGFEGEEHVKVPIMSEAARGSAYEDPRSQFSKPNSSEICFTHSGSITPTSNDQSDDIPGNPFDFYEKYEKDRAKFSKSNSSEGDATDPESATKSILRNKSAVDLEPHNVNQQPKKGRKVRNQKKKERTLDDDLRDMSAYQKVMHDLVEKEPTAPEPLPPGKFIDSHAPKKRVSRFKEQRALNKT.

2 coiled-coil regions span residues 91–115 (RLKL…KLHT) and 143–176 (LAEH…LRKL). The span at 205–217 (PLKSTNESSPKSL) shows a compositional bias: polar residues. Disordered stretches follow at residues 205–224 (PLKS…EEDE), 259–302 (MSGE…EEEV), and 370–396 (ASEE…TVSE). The stretch at 220–258 (EEEDELWKKLEAEEQNEADELSSEAEESLKTTDNLVRQL) forms a coiled coil. Over residues 285 to 300 (ISEDDGDDDDEGDQEE) the composition is skewed to acidic residues. Coiled-coil stretches lie at residues 357-379 (DDLQ…EVVE) and 452-477 (SIKT…VKEN). Composition is skewed to polar residues over residues 508–518 (GAIPSPSSDQS) and 575–599 (SQFS…TSND). Disordered stretches follow at residues 508–527 (GAIP…KPSD), 567–682 (GSAY…DLRD), and 694–731 (VEKE…LNKT). Residues 611 to 621 (FYEKYEKDRAK) show a composition bias toward basic and acidic residues. Residues 623–644 (SKSNSSEGDATDPESATKSILR) are compositionally biased toward polar residues. Residues 661–673 (KKGRKVRNQKKKE) show a composition bias toward basic residues. The span at 721-731 (RFKEQRALNKT) shows a compositional bias: basic and acidic residues.

The protein belongs to the RNA polymerase II subunit 5-mediating protein family. Interacts with serine/threonine-protein phosphatases flw/PP1beta9C and Pp1-87B with higher affinity for Pp1-87B.

It is found in the cytoplasm. Its subcellular location is the chromosome. It localises to the nucleus. Functionally, inhibits the activity of serine/threonine-protein phosphatases flw/PP1beta9C and Pp1-87B. Required for germ line cell viability and differentiation, normal transcriptional activity and maintenance of DNA integrity. This is Unconventional prefoldin RPB5 interactor-like protein from Drosophila melanogaster (Fruit fly).